The following is a 92-amino-acid chain: Small ribosomal subunit protein uS19 (92 aa).

It belongs to the universal ribosomal protein uS19 family.

Functionally, protein S19 forms a complex with S13 that binds strongly to the 16S ribosomal RNA. The sequence is that of Small ribosomal subunit protein uS19 from Mycoplasmopsis agalactiae (strain NCTC 10123 / CIP 59.7 / PG2) (Mycoplasma agalactiae).